Reading from the N-terminus, the 199-residue chain is Prolactin-1 (199 aa).

Disulfide bonds link Cys4-Cys11, Cys58-Cys174, and Cys191-Cys199. Asn60 carries N-linked (GlcNAc...) asparagine glycosylation.

This sequence belongs to the somatotropin/prolactin family. Glycosylated.

The protein resides in the secreted. This is Prolactin-1 from Alligator mississippiensis (American alligator).